Consider the following 110-residue polypeptide: UPF0122 protein Sca_0859 (110 aa).

Belongs to the UPF0122 family.

In terms of biological role, might take part in the signal recognition particle (SRP) pathway. This is inferred from the conservation of its genetic proximity to ftsY/ffh. May be a regulatory protein. This is UPF0122 protein Sca_0859 from Staphylococcus carnosus (strain TM300).